The sequence spans 322 residues: uncharacterized protein (322 aa).

Disordered stretches follow at residues 1 to 51 and 107 to 130; these read MARS…GAWA and QERQ…DRPD. Residues 119–130 show a composition bias toward basic and acidic residues; it reads LHLEPGNEDRPD.

In terms of tissue distribution, expressed in skin and fetal lung.

This is an uncharacterized protein from Homo sapiens (Human).